Consider the following 989-residue polypeptide: Phosphoenolpyruvate carboxylase (989 aa).

Catalysis depends on residues H175 and K630.

It belongs to the PEPCase type 1 family. Mg(2+) serves as cofactor.

The catalysed reaction is oxaloacetate + phosphate = phosphoenolpyruvate + hydrogencarbonate. In terms of biological role, forms oxaloacetate, a four-carbon dicarboxylic acid source for the tricarboxylic acid cycle. This Prochlorococcus marinus subsp. pastoris (strain CCMP1986 / NIES-2087 / MED4) protein is Phosphoenolpyruvate carboxylase.